Consider the following 508-residue polypeptide: Cytochrome P450 monooxygenase tenA (508 aa).

The helical transmembrane segment at 8 to 24 (VSLPYLILSACLSVILL) threads the bilayer. Cys-456 contributes to the heme binding site.

It belongs to the cytochrome P450 family. Requires heme as cofactor.

Its subcellular location is the membrane. It participates in secondary metabolite biosynthesis. Cytochrome P450 monooxygenase; part of the gene cluster that mediates the biosynthesis of tenellin-type 2-pyridones, iron-chelating compounds involved in iron stress tolerance, competition with the natural competitor fungus Metarhizium robertsii and insect hosts infection. TenA catalyzes an oxidative ring expansion of pretenellin A and 14-hydropretellenin A to form the 2-pyridone core, leading to the production of pretenellin B and pyridovericin, respectively. The pathway begins with the assembly of the polyketide-amino acid backbone by the hybrid PKS-NRPS tenS with the help of the enoyl reductase tenC. These enzymes catalyze the synthesis of the pyrrolidine-2-dione intermediates pretellinin A, 11-hydropretellenin A, 12-hydropretellenin A, 13-hydropretellenin A, 14-hydropretellenin A, 12-oxopretellenin A and prototellinin D. The cytochrome P450 monooxygenase tenA then catalyzes an oxidative ring expansion of pretenellin A and 14-hydropretellenin A to form the 2-pyridone core, leading to pretenellin B and pyridovericin, respectively. The cytochrome P450 monooxygenase tenB is then required for the selective N-hydroxylation of the 2-pyridone nitrogen of yield tellinin and 15-hydroxytellenin (15-HT), respectively. The UDP-glucosyltransferase GT1 and the methyltransferase MT1, located outside the tenS gene cluster, contribute to the stepwise glycosylation and methylation of 15-HT to obtain the glycoside pyridovericin-N-O-(4-O-methyl-beta-D-glucopyranoside) (PMGP). Additional related compounds such as 1-O-methyl-15-HT, (8Z)-1-O-methyl-15-HT, and O-methyltenellin A are also produced but the enzymes involved in their biosynthesis have still to be determined. The chain is Cytochrome P450 monooxygenase tenA from Beauveria bassiana (White muscardine disease fungus).